The following is a 368-amino-acid chain: Ubl carboxyl-terminal hydrolase 18 (368 aa).

The tract at residues 31 to 48 is mediates interaction with IFNAR2; it reads MKRKRVLSRDLCSAWDSP. A mediates interaction with STAT2 region spans residues 48–109; sequence PHGLVGLHNI…LLLLLEKMQD (62 aa). A USP domain is found at 52–366; sequence VGLHNIGQTC…TAYLLVYTKT (315 aa). Cysteine 61 serves as the catalytic Nucleophile. The mediates interaction with STAT2 and necessary for the negative regulation of the type I IFN signaling pathway stretch occupies residues 299 to 308; that stretch reads ELFAVIAHVG. The segment at 309-368 is mediates interaction with IFNAR2; the sequence is MADFGHYCAYIRNPVDGKWFCFNDSHVCWVTWKDVQCTYGNHRYRWRETAYLLVYTKTGS. Histidine 314 (proton acceptor) is an active-site residue.

This sequence belongs to the peptidase C19 family. In terms of assembly, interacts with STAT2; the interaction is direct. Interacts with IFNAR2; indirectly via STAT2, it negatively regulates the assembly of the ternary interferon-IFNAR1-IFNAR2 complex and inhibits type I interferon signaling. Interacts with STING1. Interacts with USP20.

The catalysed reaction is Thiol-dependent hydrolysis of ester, thioester, amide, peptide and isopeptide bonds formed by the C-terminal Gly of ubiquitin (a 76-residue protein attached to proteins as an intracellular targeting signal).. In terms of biological role, interferon-induced ISG15-specific protease that plays a crucial role for maintaining a proper balance of ISG15-conjugated proteins in cells. Regulates protein ISGylation by efficiently cleaving ISG15 conjugates linked via isopeptide bonds. Regulates T-cell activation and T-helper 17 (Th17) cell differentiation by deubiquitinating TAK1, likely to keep TAK1-TAB complexes in steady conditions. In turn, restricts activation of NF-kappa-B, NFAT, and JNK as well as expression of IL2 in T-cells after TCR activation. Acts as a molecular adapter with USP20 to promote innate antiviral response through deubiquitinating STING1. Involved also in the negative regulation of the inflammatory response triggered by type I interferon. Upon recruitment by STAT2 to the type I interferon receptor subunit IFNAR2 interferes with the assembly of the ternary interferon-IFNAR1-IFNAR2 complex and acts as a negative regulator of the type I interferon signaling pathway. This Mus musculus (Mouse) protein is Ubl carboxyl-terminal hydrolase 18 (Usp18).